A 1311-amino-acid polypeptide reads, in one-letter code: Transcriptional regulator ATRX homolog (1311 aa).

Residues 1-384 (MGKKNPNARH…KQKNKRKHIR (384 aa)) form a disordered region. Residues 28-40 (SRRESATESKSAS) are compositionally biased toward basic and acidic residues. The span at 61–83 (KASGKATVSSSSDSDQAVANSSA) shows a compositional bias: low complexity. Positions 114 to 125 (RGSQQKNVTIND) are enriched in polar residues. Phosphoserine occurs at positions 126 and 127. Residues 155-166 (SDSEEVDEEEES) show a composition bias toward acidic residues. The span at 181 to 202 (KPEKNSSKASKESIEKRQKAQK) shows a compositional bias: basic and acidic residues. Residues 219–237 (RRGSLSSERSSRASSSRAE) show a composition bias toward low complexity. The span at 241–265 (RPKRCVVRLKRVSLPKTKPAQKPKK) shows a compositional bias: basic residues. Residues Ser-267, Ser-268, and Ser-270 each carry the phosphoserine modification. Acidic residues predominate over residues 290–306 (EADSDYEAPAAEEEEEE). Residues Ser-336, Ser-338, Ser-342, and Ser-343 each carry the phosphoserine modification. Residues 336 to 351 (SESDKGSSDFEPEEKQ) show a composition bias toward basic and acidic residues. The segment covering 352–361 (KKKGRKRIKK) has biased composition (basic residues). The region spanning 476–664 (ESQEKPGSGC…YCMIQFVKPN (189 aa)) is the Helicase ATP-binding domain. An ATP-binding site is contributed by 489–496 (HCMGLGKT). The DEGH box motif lies at 615-618 (DEGH). The interval 837–878 (ASSGKVKKRKTRNGNAGGGDSDSDLEMLGGLGGGSSVQKDDP) is disordered. Ser-857 and Ser-859 each carry phosphoserine. In terms of domain architecture, Helicase C-terminal spans 905-1085 (RLLQQCEAIG…SRHYNQTDLM (181 aa)). The segment at 1285–1311 (MAGGSVAHGPPAAPAPGFEPDKVYEID) is disordered.

The protein belongs to the SNF2/RAD54 helicase family.

The protein localises to the nucleus. Its subcellular location is the chromosome. It catalyses the reaction ATP + H2O = ADP + phosphate + H(+). In terms of biological role, global transcriptional regulator. Modifies gene expression by affecting chromatin. In Drosophila melanogaster (Fruit fly), this protein is Transcriptional regulator ATRX homolog (XNP).